The chain runs to 763 residues: Photosystem I P700 chlorophyll a apoprotein A1 (763 aa).

8 helical membrane passes run I72 to A95, L158 to H181, L197 to L221, T305 to Y323, W360 to Y383, L399 to V425, A447 to H469, and F544 to L562. Positions 586 and 595 each coordinate [4Fe-4S] cluster. 2 helical membrane passes run H602–W623 and T677–F699. Residue H688 participates in chlorophyll a' binding. Residues M696 and Y704 each coordinate chlorophyll a. W705 provides a ligand contact to phylloquinone. The chain crosses the membrane as a helical span at residues A737–A757.

Belongs to the PsaA/PsaB family. As to quaternary structure, the PsaA/B heterodimer binds the P700 chlorophyll special pair and subsequent electron acceptors. PSI consists of a core antenna complex that captures photons, and an electron transfer chain that converts photonic excitation into a charge separation. The cyanobacterial PSI reaction center is composed of one copy each of PsaA,B,C,D,E,F,I,J,K,L,M and X, and forms trimeric complexes. PSI electron transfer chain: 5 chlorophyll a, 1 chlorophyll a', 2 phylloquinones and 3 4Fe-4S clusters. PSI core antenna: 90 chlorophyll a, 22 carotenoids, 3 phospholipids and 1 galactolipid. P700 is a chlorophyll a/chlorophyll a' dimer, A0 is one or more chlorophyll a, A1 is one or both phylloquinones and FX is a shared 4Fe-4S iron-sulfur center. serves as cofactor.

The protein resides in the cellular thylakoid membrane. The enzyme catalyses reduced [plastocyanin] + hnu + oxidized [2Fe-2S]-[ferredoxin] = oxidized [plastocyanin] + reduced [2Fe-2S]-[ferredoxin]. PsaA and PsaB bind P700, the primary electron donor of photosystem I (PSI), as well as the electron acceptors A0, A1 and FX. PSI is a plastocyanin/cytochrome c6-ferredoxin oxidoreductase, converting photonic excitation into a charge separation, which transfers an electron from the donor P700 chlorophyll pair to the spectroscopically characterized acceptors A0, A1, FX, FA and FB in turn. Oxidized P700 is reduced on the lumenal side of the thylakoid membrane by plastocyanin or cytochrome c6. This is Photosystem I P700 chlorophyll a apoprotein A1 from Synechococcus elongatus (strain ATCC 33912 / PCC 7942 / FACHB-805) (Anacystis nidulans R2).